The sequence spans 316 residues: Pantothenate kinase (316 aa).

Residue 96 to 103 (GSVAVGKS) participates in ATP binding.

Belongs to the prokaryotic pantothenate kinase family.

Its subcellular location is the cytoplasm. The enzyme catalyses (R)-pantothenate + ATP = (R)-4'-phosphopantothenate + ADP + H(+). It functions in the pathway cofactor biosynthesis; coenzyme A biosynthesis; CoA from (R)-pantothenate: step 1/5. This is Pantothenate kinase from Shouchella clausii (strain KSM-K16) (Alkalihalobacillus clausii).